The chain runs to 514 residues: Beta-galactoside alpha-2,6-sialyltransferase 2 (514 aa).

Residues 1 to 10 lie on the Cytoplasmic side of the membrane; it reads MKSSLKQWRR. A helical; Signal-anchor for type II membrane protein membrane pass occupies residues 11-31; sequence LALGLILVWALLFLALLSYFM. Over 32-514 the chain is Lumenal; sequence ESRVDDPHAA…PGFNKVHCEP (483 aa). Residues 70–92 are compositionally biased toward low complexity; the sequence is ATSSAPSTSSNTQQEQSQEENPS. Residues 70-183 are disordered; the sequence is ATSSAPSTSS…TKRVARHGSS (114 aa). Positions 119-132 are enriched in polar residues; sequence FGTQDVGSRSTGVS. The segment covering 145-166 has biased composition (acidic residues); sequence PQEDEDEEEEVIGGEEEDEEGG. 3 disulfides stabilise this stretch: Cys246/Cys512, Cys289/Cys441, and Cys459/Cys470. Residues Asn330, Asn350, and Asn357 are each glycosylated (N-linked (GlcNAc...) asparagine).

The protein belongs to the glycosyltransferase 29 family.

The protein resides in the golgi apparatus. It is found in the golgi stack membrane. The catalysed reaction is a beta-D-galactoside + CMP-N-acetyl-beta-neuraminate = an N-acetyl-alpha-neuraminyl-(2-&gt;6)-beta-D-galactosyl derivative + CMP + H(+). In terms of biological role, transfers sialic acid from the donor of substrate CMP-sialic acid to galactose containing acceptor substrates. The sequence is that of Beta-galactoside alpha-2,6-sialyltransferase 2 (st6gal2) from Danio rerio (Zebrafish).